Consider the following 201-residue polypeptide: Large ribosomal subunit protein uL4 (201 aa).

The interval 45–71 (AQKTRAEVTGSGKKPWRQKGTGRARAG) is disordered.

This sequence belongs to the universal ribosomal protein uL4 family. Part of the 50S ribosomal subunit.

Its function is as follows. One of the primary rRNA binding proteins, this protein initially binds near the 5'-end of the 23S rRNA. It is important during the early stages of 50S assembly. It makes multiple contacts with different domains of the 23S rRNA in the assembled 50S subunit and ribosome. In terms of biological role, forms part of the polypeptide exit tunnel. In Shewanella pealeana (strain ATCC 700345 / ANG-SQ1), this protein is Large ribosomal subunit protein uL4.